The primary structure comprises 418 residues: Queuine tRNA-ribosyltransferase accessory subunit 2 (418 aa).

Residues C325, C327, C330, and H356 each contribute to the Zn(2+) site.

Belongs to the queuine tRNA-ribosyltransferase family. QTRT2 subfamily. As to quaternary structure, heterodimer of a catalytic subunit and an accessory subunit. Zn(2+) is required as a cofactor.

The protein localises to the cytoplasm. Non-catalytic subunit of the queuine tRNA-ribosyltransferase (TGT) that catalyzes the base-exchange of a guanine (G) residue with queuine (Q) at position 34 (anticodon wobble position) in tRNAs with GU(N) anticodons (tRNA-Asp, -Asn, -His and -Tyr), resulting in the hypermodified nucleoside queuosine (7-(((4,5-cis-dihydroxy-2-cyclopenten-1-yl)amino)methyl)-7-deazaguanosine). In Drosophila erecta (Fruit fly), this protein is Queuine tRNA-ribosyltransferase accessory subunit 2.